A 509-amino-acid polypeptide reads, in one-letter code: tRNA-2-methylthio-N(6)-dimethylallyladenosine synthase (509 aa).

Residues 1–13 (MNEQQRLASQQAN) show a composition bias toward polar residues. A disordered region spans residues 1 to 26 (MNEQQRLASQQANSSKKKEEKDYSKY). A compositionally biased stretch (basic and acidic residues) spans 16 to 25 (KKKEEKDYSK). Residues 66-184 (RKFYIRTYGC…LPYILKDAMF (119 aa)) enclose the MTTase N-terminal domain. Positions 75, 111, 145, 221, 225, and 228 each coordinate [4Fe-4S] cluster. Residues 207–437 (RRGDIKAWVN…NALVNKLAIE (231 aa)) enclose the Radical SAM core domain. Positions 440–503 (NRYKGQIVEV…TWSLNGELVE (64 aa)) constitute a TRAM domain.

It belongs to the methylthiotransferase family. MiaB subfamily. Monomer. [4Fe-4S] cluster serves as cofactor.

The protein resides in the cytoplasm. It catalyses the reaction N(6)-dimethylallyladenosine(37) in tRNA + (sulfur carrier)-SH + AH2 + 2 S-adenosyl-L-methionine = 2-methylsulfanyl-N(6)-dimethylallyladenosine(37) in tRNA + (sulfur carrier)-H + 5'-deoxyadenosine + L-methionine + A + S-adenosyl-L-homocysteine + 2 H(+). Its function is as follows. Catalyzes the methylthiolation of N6-(dimethylallyl)adenosine (i(6)A), leading to the formation of 2-methylthio-N6-(dimethylallyl)adenosine (ms(2)i(6)A) at position 37 in tRNAs that read codons beginning with uridine. The protein is tRNA-2-methylthio-N(6)-dimethylallyladenosine synthase of Bacillus cereus (strain ATCC 10987 / NRS 248).